Here is a 37-residue protein sequence, read N- to C-terminus: Large ribosomal subunit protein bL36 (37 aa).

This sequence belongs to the bacterial ribosomal protein bL36 family.

This Staphylococcus aureus (strain Mu3 / ATCC 700698) protein is Large ribosomal subunit protein bL36.